A 241-amino-acid chain; its full sequence is ATP synthase subunit a (241 aa).

The next 8 helical transmembrane spans lie at 29 to 49, 54 to 74, 86 to 106, 114 to 134, 153 to 173, 177 to 197, 200 to 220, and 221 to 241; these read NSSFFTMISVILMILFLLFGI, VIPGYLQAAVEYVYDFVISII, IPLIFTVFIFILSCNLVGVLP, HVIVTFALSMVVFIYITIVGF, WLAPIIIIIKLFAYLVRPVSL, LAANMIAGHTIIKVIAGFIVN, IFFTPAPFLFIIALIGFEVFV, and AILQAYIFTILTCVYLSDAVK.

Belongs to the ATPase A chain family. F-type ATPases have 2 components, CF(1) - the catalytic core - and CF(0) - the membrane proton channel. CF(1) has five subunits: alpha(3), beta(3), gamma(1), delta(1), epsilon(1). CF(0) has three main subunits: a(1), b(2) and c(9-12). The alpha and beta chains form an alternating ring which encloses part of the gamma chain. CF(1) is attached to CF(0) by a central stalk formed by the gamma and epsilon chains, while a peripheral stalk is formed by the delta and b chains.

Its subcellular location is the cell membrane. Key component of the proton channel; it plays a direct role in the translocation of protons across the membrane. The polypeptide is ATP synthase subunit a (Wolbachia pipientis wMel).